A 184-amino-acid polypeptide reads, in one-letter code: Bifunctional protein PyrR (184 aa).

Positions 99-111 (IVLVDDVLYTGRT) match the PRPP-binding motif.

The protein belongs to the purine/pyrimidine phosphoribosyltransferase family. PyrR subfamily. Homodimer and homohexamer; in equilibrium.

It catalyses the reaction UMP + diphosphate = 5-phospho-alpha-D-ribose 1-diphosphate + uracil. In terms of biological role, regulates transcriptional attenuation of the pyrimidine nucleotide (pyr) operon by binding in a uridine-dependent manner to specific sites on pyr mRNA. This disrupts an antiterminator hairpin in the RNA and favors formation of a downstream transcription terminator, leading to a reduced expression of downstream genes. Functionally, also displays a weak uracil phosphoribosyltransferase activity which is not physiologically significant. The polypeptide is Bifunctional protein PyrR (Acetivibrio thermocellus (strain ATCC 27405 / DSM 1237 / JCM 9322 / NBRC 103400 / NCIMB 10682 / NRRL B-4536 / VPI 7372) (Clostridium thermocellum)).